The chain runs to 1179 residues: ATP-dependent helicase/deoxyribonuclease subunit B (1179 aa).

This sequence belongs to the helicase family. AddB/RexB type 2 subfamily. Heterodimer of AddA and RexB. It depends on Mg(2+) as a cofactor.

Its function is as follows. The heterodimer acts as both an ATP-dependent DNA helicase and an ATP-dependent, dual-direction single-stranded exonuclease. Recognizes the chi site generating a DNA molecule suitable for the initiation of homologous recombination. This subunit has 5' -&gt; 3' nuclease activity but not helicase activity. This is ATP-dependent helicase/deoxyribonuclease subunit B from Lacticaseibacillus paracasei (strain ATCC 334 / BCRC 17002 / CCUG 31169 / CIP 107868 / KCTC 3260 / NRRL B-441) (Lactobacillus paracasei).